We begin with the raw amino-acid sequence, 146 residues long: Large ribosomal subunit protein uL15 (146 aa).

Residues 1 to 56 (MKLHELRAAEGANKASKRVGRGTGSGLGKTSGRGQNGQNSRSGGGVRPGFEGGQMP) are disordered. Gly residues-rich tracts occupy residues 21–35 (RGTG…GRGQ) and 42–52 (SGGGVRPGFEG).

It belongs to the universal ribosomal protein uL15 family. As to quaternary structure, part of the 50S ribosomal subunit.

Its function is as follows. Binds to the 23S rRNA. The polypeptide is Large ribosomal subunit protein uL15 (Clostridium botulinum (strain Okra / Type B1)).